Consider the following 467-residue polypeptide: Tyrosine phenol-lyase (467 aa).

Lys268 bears the N6-(pyridoxal phosphate)lysine mark.

Belongs to the beta-eliminating lyase family. Homotetramer. Pyridoxal 5'-phosphate serves as cofactor.

The enzyme catalyses L-tyrosine + H2O = phenol + pyruvate + NH4(+). The chain is Tyrosine phenol-lyase from Nostoc punctiforme (strain ATCC 29133 / PCC 73102).